Here is a 422-residue protein sequence, read N- to C-terminus: Acyl-[acyl-carrier-protein] desaturase 6, chloroplastic (422 aa).

The N-terminal 46 residues, 1–46, are a transit peptide targeting the chloroplast; the sequence is MAATATMAMPLANRLRCKPNTNSSSPSRTLFGRRVTMISSSRWMCR. Glu-154, Glu-192, His-195, Glu-245, Glu-280, and His-283 together coordinate Fe cation.

The protein belongs to the fatty acid desaturase type 2 family. As to quaternary structure, homodimer. It depends on Fe(2+) as a cofactor.

The protein resides in the plastid. It localises to the chloroplast. It participates in lipid metabolism; fatty acid metabolism. In terms of biological role, introduces a cis double bond in the acyl chain of an acyl-[acyl-carrier protein]. This is Acyl-[acyl-carrier-protein] desaturase 6, chloroplastic from Oryza sativa subsp. indica (Rice).